The following is a 487-amino-acid chain: Calcium-dependent mitochondrial ATP-magnesium/phosphate carrier protein 2 (487 aa).

The Mitochondrial intermembrane segment spans residues 1-211; it reads MEATKSSKQN…ISKHIKRSNY (211 aa). 4 EF-hand domains span residues 36–71, 72–107, 108–138, and 139–174; these read ERDL…LQIP, SGYK…KELE, LYRI…AGIE, and IKDE…YPHE. Ca(2+) contacts are provided by Asp85, Asn87, Asp89, Arg91, and Glu96. Ca(2+) contacts are provided by Asp152, Asp154, Asp156, and Glu163. 3 Solcar repeats span residues 206 to 289, 301 to 389, and 400 to 483; these read IKRS…FKNA, IGTT…LKDL, and PGPL…MKKS. A helical transmembrane segment spans residues 212–229; it reads FIAGGIAGAASRTATAPL. Topologically, residues 230–263 are mitochondrial matrix; that stretch reads DRLKVLLQIQKTDARIREAIKLIWKQGGVRGFFR. A helical membrane pass occupies residues 264-283; it reads GNGLNIVKVAPESAIKFYAY. Residues 284 to 310 lie on the Mitochondrial intermembrane side of the membrane; that stretch reads ELFKNAIGENMGEDKADIGTTVRLFAG. The chain crosses the membrane as a helical span at residues 311-324; that stretch reads GMAGAVAQASIYPL. Residues 325–363 are Mitochondrial matrix-facing; that stretch reads DLVKTRLQTYTSQAGVAVPRLGTLTKDILVHEGPRAFYK. The chain crosses the membrane as a helical span at residues 364–383; sequence GLFPSLLGIIPYAGIDLAAY. The Mitochondrial intermembrane portion of the chain corresponds to 384–405; it reads ETLKDLSRTYILQDAEPGPLVQ. The chain crosses the membrane as a helical span at residues 406-423; the sequence is LGCGTISGALGATCVYPL. The Mitochondrial matrix segment spans residues 424-457; that stretch reads QVVRTRMQAERARTSMSGVFRRTISEEGYRALYK. A helical membrane pass occupies residues 458–477; the sequence is GLLPNLLKVVPAASITYMVY. At 478 to 487 the chain is on the mitochondrial intermembrane side; it reads EAMKKSLELD.

This sequence belongs to the mitochondrial carrier (TC 2.A.29) family. Expressed in flowers, leaves, stems, roots and seedlings, mostly in aerial parts.

Its subcellular location is the mitochondrion inner membrane. Counter-exchange transport activity is saturable and inhibited by pyridoxal-5'-phosphate, EDTA and EGTA. Activated by calcium Ca(2+) and manganese Mn(2+) ions, and slightly by iron Fe(2+) and zinc Zn(2+) ions. Repressed by copper ions Cu(2+) and slightly by magnesium Mg(2+) ions. Magnesium Mg(2+) ions promotes slightly ATP uptake, ATP-Mg(2+) being exchanged with ATP(4-). Its function is as follows. Calcium-dependent mitochondrial carrier protein that catalyzes the import of ATP co-transported with metal divalent cations across the mitochondrial inner membrane in exchange for phosphate (Pi). Can transport phosphate, AMP, ADP, ATP, adenosine 5'-phosphosulfate, sulfate and thiosulfate, and, to a lesser extent, other nucleotides. Binds calcium ions Ca(2+). Also mediates calcium uptake. This is Calcium-dependent mitochondrial ATP-magnesium/phosphate carrier protein 2 from Arabidopsis thaliana (Mouse-ear cress).